Reading from the N-terminus, the 366-residue chain is Endophilin-B1 (366 aa).

The interval Met-1–Leu-30 is membrane-binding amphipathic helix. A required for membrane binding region spans residues Met-1–Glu-37. The BAR domain maps to Glu-27–Ser-261. Coiled-coil stretches lie at residues Glu-34 to Gln-54 and Lys-160 to Ala-185. In terms of domain architecture, SH3 spans Ser-306–Asn-366.

This sequence belongs to the endophilin family. As to quaternary structure, homodimer, and heterodimer with SH3GLB2. Binds BAX. Binds DNM1, HTT, AMPH, BIN1 and ARFGAP1.

It is found in the cytoplasm. The protein localises to the golgi apparatus membrane. It localises to the mitochondrion outer membrane. In terms of biological role, may be required for normal outer mitochondrial membrane dynamics. Required for coatomer-mediated retrograde transport in certain cells. May recruit other proteins to membranes with high curvature. May promote membrane fusion. The chain is Endophilin-B1 from Gallus gallus (Chicken).